Reading from the N-terminus, the 232-residue chain is Small ribosomal subunit protein uS2 (232 aa).

It belongs to the universal ribosomal protein uS2 family.

The sequence is that of Small ribosomal subunit protein uS2 from Heliobacterium modesticaldum (strain ATCC 51547 / Ice1).